Here is a 256-residue protein sequence, read N- to C-terminus: Small ribosomal subunit protein eS1 (256 aa).

The segment covering M1 to K18 has biased composition (basic residues). A disordered region spans residues M1–A20. A2 bears the N-acetylalanine; partial mark.

This sequence belongs to the eukaryotic ribosomal protein eS1 family. In terms of assembly, component of the small ribosomal subunit. Mature ribosomes consist of a small (40S) and a large (60S) subunit. The 40S subunit contains about 33 different proteins and 1 molecule of RNA (18S). The 60S subunit contains about 49 different proteins and 3 molecules of RNA (25S, 5.8S and 5S).

It is found in the cytoplasm. The protein is Small ribosomal subunit protein eS1 of Chaetomium globosum (strain ATCC 6205 / CBS 148.51 / DSM 1962 / NBRC 6347 / NRRL 1970) (Soil fungus).